The chain runs to 392 residues: Major outer membrane protein P.IA (392 aa).

Residues 1–19 (MRKKLTALVLSALPLAAVA) form the signal peptide.

Belongs to the Gram-negative porin family. In terms of assembly, homotrimer.

The protein resides in the cell outer membrane. In terms of biological role, serves as a slightly cation selective porin. Major antigen on the gonococcal cell surface and it may have pathogenic properties in addition to its porin activity. This Neisseria meningitidis serogroup B / serotype 15 (strain H44/76) protein is Major outer membrane protein P.IA (porA).